We begin with the raw amino-acid sequence, 491 residues long: Lysine--tRNA ligase (491 aa).

2 residues coordinate Mg(2+): E400 and E407.

This sequence belongs to the class-II aminoacyl-tRNA synthetase family. In terms of assembly, homodimer. Requires Mg(2+) as cofactor.

Its subcellular location is the cytoplasm. The enzyme catalyses tRNA(Lys) + L-lysine + ATP = L-lysyl-tRNA(Lys) + AMP + diphosphate. The protein is Lysine--tRNA ligase of Mesomycoplasma hyopneumoniae (strain 7448) (Mycoplasma hyopneumoniae).